The following is a 331-amino-acid chain: MSDITFFIVETIIKAVVILSVIATLAGLGTYAERKVLAYMQRRVGPWMVGPAGVLQIVADMIKLFTKEDTMPSGANRFIFLIAPIISASCAFVAMSVIPFLPEFEIFGHVVRPILSDVNIGILFLLSVSGTCVYGTLIGGLASYNKWGVIGSARSVLQLISFEIVNGLSLIPVIMMVGSLSLIDIVHEQNNGITSWFLIKQPVCFVLFTIAAFIECNRTPLCLTENETELVAGCGTAYSGMRWGMFFIGEYANMITYSIVISLIFLGGFNSFWFIPGSLMIFLKASFIFFFMLWTRAAWPHLRPDQLMELCWKICMPIALICIFVTAFVII.

9 helical membrane passes run 6–26 (FFIV…ATLA), 45–65 (GPWM…IKLF), 78–98 (FIFL…MSVI), 120–140 (IGIL…LIGG), 167–187 (GLSL…DIVH), 193–213 (ITSW…IAAF), 241–261 (MRWG…SIVI), 263–283 (LIFL…MIFL), and 311–331 (CWKI…FVII).

It belongs to the complex I subunit 1 family. NDH-1 is composed of 14 different subunits. Subunits NuoA, H, J, K, L, M, N constitute the membrane sector of the complex.

It is found in the cell inner membrane. The enzyme catalyses a quinone + NADH + 5 H(+)(in) = a quinol + NAD(+) + 4 H(+)(out). Functionally, NDH-1 shuttles electrons from NADH, via FMN and iron-sulfur (Fe-S) centers, to quinones in the respiratory chain. The immediate electron acceptor for the enzyme in this species is believed to be ubiquinone. Couples the redox reaction to proton translocation (for every two electrons transferred, four hydrogen ions are translocated across the cytoplasmic membrane), and thus conserves the redox energy in a proton gradient. This subunit may bind ubiquinone. The sequence is that of NADH-quinone oxidoreductase subunit H from Campylobacter hominis (strain ATCC BAA-381 / DSM 21671 / CCUG 45161 / LMG 19568 / NCTC 13146 / CH001A).